Consider the following 525-residue polypeptide: MAFASLLHHIWNHAVDCAEQLTWWQTIVSFIIFCIMCSWLPGNGEMRAPFVGYRWPFEPTFWVRMRFIFQSLGMMTEGYSKFKDSMFKITTNDADWLVLSQRYLDDLQSLPAERLSHTDALVTMWGSSHSPFALLNKSDLSSRALRDVVAPNYAKDLDSLVDELRYSLEHDIDIQDDWKPIDALELSSKLVLRISQRILIGWPMSRDQELLECAQGYADAATVVQFALKLLPRQIRPLVYPLLPQAWATKSWIRRCDKILAKEMQRRQVLEKSDPVYEKPKDLLQGMVDLEPSRPVDKLGHDFLVQALISRMAPVVTMAQTLVDLALHPEDIEELRDEVLQVIGPDGAGLGNLRQSFTKLDKMDSVLRESARFTPLSMMTMHRRVQDAKGITLHDGVHLPRGTHVAFPAYHIGRDPKLVSGADIYDGLRWYRKDLGEAQENEAPKHRFVTPDSNYLTFGSGKYVCPGRFIAEHMLKLMMTAVLLRYEFKWPPGVPVPEQQYRHVFAYPSKTTLLIKRRKDGDQIL.

Residues 21–43 (LTWWQTIVSFIIFCIMCSWLPGN) form a helical membrane-spanning segment. Asparagine 136 carries N-linked (GlcNAc...) asparagine glycosylation. Position 465 (cysteine 465) interacts with heme.

Belongs to the cytochrome P450 family. Requires heme as cofactor.

It is found in the membrane. Its pathway is secondary metabolite biosynthesis. Functionally, cytochrome P450 monooxygenase; part of the gene clusters that mediates the biosynthesis of lolitrems, indole-diterpene mycotoxins that are potent tremorgens in mammals, and are synthesized by clavicipitaceous fungal endophytes in association with their grass hosts. The geranylgeranyl diphosphate (GGPP) synthase ltmG is proposed to catalyze the first step in lolitrem biosynthesis. LtmG catalyzes a series of iterative condensations of isopentenyl diphosphate (IPP) with dimethylallyl diphosphate (DMAPP), geranyl diphosphate (GPP), and farnesyl diphosphate (FPP), to form GGPP. GGPP then condenses with indole-3-glycerol phosphate to form 3-geranylgeranylindole, an acyclic intermediate, to be incorporated into paxilline. Either ltmG or ltmC could be responsible for this step, as both are putative prenyl transferases. The FAD-dependent monooxygenase ltmM then catalyzes the epoxidation of the two terminal alkenes of the geranylgeranyl moiety, which is subsequently cyclized by ltmB, to paspaline. The cytochrome P450 monooxygenases ltmQ and ltmP can sequentially oxidize paspaline to terpendole E and terpendole F. Alternatively, ltmP converts paspaline to an intermediate which is oxidized by ltmQ to terpendole F. LtmF, ltmK, ltmE and ltmJ appear to be unique to the epichloe endophytes. The prenyltransferase ltmF is involved in the 27-hydroxyl-O-prenylation. The cytochrome P450 monooxygenase ltmK is required for the oxidative acetal ring formation. The multi-functional prenyltransferase ltmE is required for C20- and C21-prenylations of the indole ring of paspalanes and acts together with the cytochrome P450 monooxygenase ltmJ to yield lolitremanes by multiple oxidations and ring closures. The stereoisomer pairs of lolitriol and lolitrem N or lolitrem B and lolitrem F may be attributed to variations in the way in which ring closure can occur under the action of ltmJ. While the major product of this pathway is lolitrem B, the prenyl transferases and cytochrome P450 monooxygenases identified in this pathway have a remarkable versatility in their regio- and stereo-specificities to generate a diverse range of metabolites that are products of a metabolic grid rather than a linear pathway. This is Cytochrome P450 monooxygenase ltmJ (ltmJ) from Epichloe festucae var. lolii (Neotyphodium lolii).